The sequence spans 291 residues: 33 kDa chaperonin (291 aa).

Intrachain disulfides connect cysteine 237–cysteine 239 and cysteine 270–cysteine 273.

It belongs to the HSP33 family. Under oxidizing conditions two disulfide bonds are formed involving the reactive cysteines. Under reducing conditions zinc is bound to the reactive cysteines and the protein is inactive.

Its subcellular location is the cytoplasm. Functionally, redox regulated molecular chaperone. Protects both thermally unfolding and oxidatively damaged proteins from irreversible aggregation. Plays an important role in the bacterial defense system toward oxidative stress. This is 33 kDa chaperonin from Bacillus cereus (strain B4264).